A 176-amino-acid chain; its full sequence is ATP-dependent protease subunit HslV (176 aa).

Threonine 5 is a catalytic residue. 3 residues coordinate Na(+): serine 161, cysteine 164, and threonine 167.

Belongs to the peptidase T1B family. HslV subfamily. As to quaternary structure, a double ring-shaped homohexamer of HslV is capped on each side by a ring-shaped HslU homohexamer. The assembly of the HslU/HslV complex is dependent on binding of ATP.

Its subcellular location is the cytoplasm. The catalysed reaction is ATP-dependent cleavage of peptide bonds with broad specificity.. Allosterically activated by HslU binding. Protease subunit of a proteasome-like degradation complex believed to be a general protein degrading machinery. This Thermoanaerobacter pseudethanolicus (strain ATCC 33223 / 39E) (Clostridium thermohydrosulfuricum) protein is ATP-dependent protease subunit HslV.